Reading from the N-terminus, the 258-residue chain is Hydroxyacylglutathione hydrolase (258 aa).

Residues histidine 52, histidine 54, aspartate 56, histidine 57, histidine 109, aspartate 126, and histidine 164 each contribute to the Zn(2+) site.

The protein belongs to the metallo-beta-lactamase superfamily. Glyoxalase II family. Monomer. Zn(2+) serves as cofactor.

It catalyses the reaction an S-(2-hydroxyacyl)glutathione + H2O = a 2-hydroxy carboxylate + glutathione + H(+). It participates in secondary metabolite metabolism; methylglyoxal degradation; (R)-lactate from methylglyoxal: step 2/2. Its function is as follows. Thiolesterase that catalyzes the hydrolysis of S-D-lactoyl-glutathione to form glutathione and D-lactic acid. This chain is Hydroxyacylglutathione hydrolase, found in Xylella fastidiosa (strain M23).